The chain runs to 239 residues: 1-(5-phosphoribosyl)-5-[(5-phosphoribosylamino)methylideneamino] imidazole-4-carboxamide isomerase (239 aa).

D8 functions as the Proton acceptor in the catalytic mechanism. The Proton donor role is filled by D129.

The protein belongs to the HisA/HisF family.

It localises to the cytoplasm. It catalyses the reaction 1-(5-phospho-beta-D-ribosyl)-5-[(5-phospho-beta-D-ribosylamino)methylideneamino]imidazole-4-carboxamide = 5-[(5-phospho-1-deoxy-D-ribulos-1-ylimino)methylamino]-1-(5-phospho-beta-D-ribosyl)imidazole-4-carboxamide. It participates in amino-acid biosynthesis; L-histidine biosynthesis; L-histidine from 5-phospho-alpha-D-ribose 1-diphosphate: step 4/9. This chain is 1-(5-phosphoribosyl)-5-[(5-phosphoribosylamino)methylideneamino] imidazole-4-carboxamide isomerase, found in Bacillus cytotoxicus (strain DSM 22905 / CIP 110041 / 391-98 / NVH 391-98).